The sequence spans 278 residues: DNA-directed RNA polymerase subunit alpha (278 aa).

Belongs to the RNA polymerase alpha chain family. In terms of assembly, in plastids the minimal PEP RNA polymerase catalytic core is composed of four subunits: alpha, beta, beta', and beta''. When a (nuclear-encoded) sigma factor is associated with the core the holoenzyme is formed, which can initiate transcription.

It is found in the plastid. It localises to the chloroplast. It carries out the reaction RNA(n) + a ribonucleoside 5'-triphosphate = RNA(n+1) + diphosphate. Functionally, DNA-dependent RNA polymerase catalyzes the transcription of DNA into RNA using the four ribonucleoside triphosphates as substrates. The protein is DNA-directed RNA polymerase subunit alpha (rpoA) of Chlorella vulgaris (Green alga).